The chain runs to 482 residues: tRNA sulfurtransferase (482 aa).

The region spanning 61-165 (LAIRDALTRI…DDRLLLIKGR (105 aa)) is the THUMP domain. ATP-binding positions include 183 to 184 (LI), Lys265, Gly287, and Gln296. The cysteines at positions 344 and 456 are disulfide-linked. The Rhodanese domain occupies 404–482 (FGPNDVILDI…GFNNVKVYRP (79 aa)). Cys456 acts as the Cysteine persulfide intermediate in catalysis.

The protein belongs to the ThiI family.

It localises to the cytoplasm. It catalyses the reaction [ThiI sulfur-carrier protein]-S-sulfanyl-L-cysteine + a uridine in tRNA + 2 reduced [2Fe-2S]-[ferredoxin] + ATP + H(+) = [ThiI sulfur-carrier protein]-L-cysteine + a 4-thiouridine in tRNA + 2 oxidized [2Fe-2S]-[ferredoxin] + AMP + diphosphate. It carries out the reaction [ThiS sulfur-carrier protein]-C-terminal Gly-Gly-AMP + S-sulfanyl-L-cysteinyl-[cysteine desulfurase] + AH2 = [ThiS sulfur-carrier protein]-C-terminal-Gly-aminoethanethioate + L-cysteinyl-[cysteine desulfurase] + A + AMP + 2 H(+). It participates in cofactor biosynthesis; thiamine diphosphate biosynthesis. Catalyzes the ATP-dependent transfer of a sulfur to tRNA to produce 4-thiouridine in position 8 of tRNAs, which functions as a near-UV photosensor. Also catalyzes the transfer of sulfur to the sulfur carrier protein ThiS, forming ThiS-thiocarboxylate. This is a step in the synthesis of thiazole, in the thiamine biosynthesis pathway. The sulfur is donated as persulfide by IscS. The sequence is that of tRNA sulfurtransferase from Shigella sonnei (strain Ss046).